We begin with the raw amino-acid sequence, 207 residues long: Probable nicotinate-nucleotide adenylyltransferase (207 aa).

This sequence belongs to the NadD family.

It carries out the reaction nicotinate beta-D-ribonucleotide + ATP + H(+) = deamido-NAD(+) + diphosphate. It participates in cofactor biosynthesis; NAD(+) biosynthesis; deamido-NAD(+) from nicotinate D-ribonucleotide: step 1/1. Catalyzes the reversible adenylation of nicotinate mononucleotide (NaMN) to nicotinic acid adenine dinucleotide (NaAD). The protein is Probable nicotinate-nucleotide adenylyltransferase of Synechococcus sp. (strain JA-3-3Ab) (Cyanobacteria bacterium Yellowstone A-Prime).